Consider the following 435-residue polypeptide: Deoxybrevianamide E synthase (435 aa).

Residues 1-28 (MTAPELRAPAGHPQEPPARSSPAQALSS) are disordered. Glu-96 contacts brevianamide F. Dimethylallyl diphosphate is bound by residues Arg-110, Lys-195, Tyr-197, Lys-265, Tyr-267, Tyr-354, Tyr-419, and Tyr-423.

The protein belongs to the tryptophan dimethylallyltransferase family. Monomer.

It carries out the reaction brevianamide F + dimethylallyl diphosphate = deoxybrevianamide E + diphosphate. The protein operates within alkaloid biosynthesis. Deoxybrevianamide E synthase; part of the gene cluster that mediates the biosynthesis of notoamide, a fungal indole alkaloid that belongs to a family of natural products containing a characteristic bicyclo[2.2.2]diazaoctane core. The first step of notoamide biosynthesis involves coupling of L-proline and L-tryptophan by the bimodular NRPS notE', to produce cyclo-L-tryptophan-L-proline called brevianamide F. The reverse prenyltransferase notF' then acts as a deoxybrevianamide E synthase and converts brevianamide F to deoxybrevianamide E via reverse prenylation at C-2 of the indole ring leading to the bicyclo[2.2.2]diazaoctane core. Deoxybrevianamide E is further hydroxylated at C-6 of the indole ring, likely catalyzed by the cytochrome P450 monooxygenase notG', to yield 6-hydroxy-deoxybrevianamide E. 6-hydroxy-deoxybrevianamide E is a specific substrate of the prenyltransferase notC' for normal prenylation at C-7 to produce 6-hydroxy-7-prenyl-deoxybrevianamide, also called notoamide S. As the proposed pivotal branching point in notoamide biosynthesis, notoamide S can be diverted to notoamide E through an oxidative pyran ring closure putatively catalyzed by either notH' cytochrome P450 monooxygenase or the notD' FAD-linked oxidoreductase. This step would be followed by an indole 2,3-epoxidation-initiated pinacol-like rearrangement catalyzed by the notB' FAD-dependent monooxygenase leading to the formation of notoamide C and notoamide D. On the other hand notoamide S is converted to notoamide T by notH' (or notD'), a bifunctional oxidase that also functions as the intramolecular Diels-Alderase responsible for generation of (-)-notoamide T. To generate antipodal (+)-notoaminide T, notH (or notD) in Aspergillus strain MF297-2 is expected to catalyze a Diels-Alder reaction leading to the opposite stereochemistry. The remaining oxidoreductase notD' (or notH') likely catalyzes the oxidative pyran ring formation to yield (-)-stephacidin A. The FAD-dependent monooxygenase notI' is highly similar to notB' and is predicted to catalyze a similar conversion from (-)-stephacidin A to (+)-notoamide B via the 2,3-epoxidation of (-)-stephacidin A followed by a pinacol-type rearrangement. Finally, it remains unclear which enzyme could be responsible for the final hydroxylation steps leading to notoamide A and sclerotiamide. This is Deoxybrevianamide E synthase from Aspergillus versicolor.